We begin with the raw amino-acid sequence, 764 residues long: MVTTHNLGFPRIGAKRELKFGLERYWKGESSRDELKALGAELRRRHWHDQRDLDLAPIGDFAFYDQVLDMSFTLGNLPKRVQDFHGDALDNAFRVARGRSAQSAEAHAACCGGVAAGEMTKWFDTNYHYIVPEFHADTNFSLDPSRLLQQLAEANAQGVNAKPVILGPVTYLWLGKAKDDSDRLALLPKLLPVYGALLDTLTAQGVEWVQIDEPILVTELDAEWRQAFRTAYAALETRRINLLLATYFGQLQDNLTLAASLPVDGLHIDAINARDEVDALVRELPPERVLSIGAINGRNIWKTDLNATLDWLEPLAKQLGDRLWLAPSCSLLHVPVDLANEAKLDAEIRSWLAFALQKLDELKVLATALNEGRDTVADALAANAAAIESRRRSPRVNNPAVKAAIARIDARLGNRASPYAQRASKQSARLNLPAFPTTTIGSFPQTAEIRQARSRFKAGTLDEAGYRTAMQAEIERSVREQESLELDVLVHGEAERNDMVEYFGEQLDGYAFSQFGWVQSYGSRCVKPPILFGDISRPKAMTVEWITYAQSLTNKPMKGMLTGPVTILNWSFVRDDQPRSVSCYQLALAIRDEVLDLEQAGVRVIQIDEAALREGLPLRRAQWSEYLKWAVESFRITANGVQDDTQIHTHMCYSEFNDIIASIADMDADVITIETSRSDMELLDAFDDFKYPNEIGPGVYDIHSPNIPTQDHIVGLMRKAAERIPAERLWVNPDCGLKTRQWGEVIPALTNMVAAAKTLRNQVR.

Residues 16 to 19 (RELK) and Lys121 contribute to the 5-methyltetrahydropteroyltri-L-glutamate site. L-homocysteine contacts are provided by residues 440–442 (IGS) and Glu493. L-methionine contacts are provided by residues 440 to 442 (IGS) and Glu493. 5-methyltetrahydropteroyltri-L-glutamate contacts are provided by residues 524–525 (RC) and Trp570. Position 608 (Asp608) interacts with L-homocysteine. Asp608 contacts L-methionine. Residue Glu614 participates in 5-methyltetrahydropteroyltri-L-glutamate binding. His650, Cys652, and Glu674 together coordinate Zn(2+). His703 serves as the catalytic Proton donor. Cys735 is a binding site for Zn(2+).

This sequence belongs to the vitamin-B12 independent methionine synthase family. Zn(2+) serves as cofactor.

It carries out the reaction 5-methyltetrahydropteroyltri-L-glutamate + L-homocysteine = tetrahydropteroyltri-L-glutamate + L-methionine. It participates in amino-acid biosynthesis; L-methionine biosynthesis via de novo pathway; L-methionine from L-homocysteine (MetE route): step 1/1. Functionally, catalyzes the transfer of a methyl group from 5-methyltetrahydrofolate to homocysteine resulting in methionine formation. The protein is 5-methyltetrahydropteroyltriglutamate--homocysteine methyltransferase of Burkholderia cenocepacia (strain ATCC BAA-245 / DSM 16553 / LMG 16656 / NCTC 13227 / J2315 / CF5610) (Burkholderia cepacia (strain J2315)).